Reading from the N-terminus, the 485-residue chain is Glutamyl-tRNA(Gln) amidotransferase subunit A (485 aa).

Residues lysine 79 and serine 154 each act as charge relay system in the active site. The active-site Acyl-ester intermediate is serine 178.

Belongs to the amidase family. GatA subfamily. As to quaternary structure, heterotrimer of A, B and C subunits.

The catalysed reaction is L-glutamyl-tRNA(Gln) + L-glutamine + ATP + H2O = L-glutaminyl-tRNA(Gln) + L-glutamate + ADP + phosphate + H(+). Allows the formation of correctly charged Gln-tRNA(Gln) through the transamidation of misacylated Glu-tRNA(Gln) in organisms which lack glutaminyl-tRNA synthetase. The reaction takes place in the presence of glutamine and ATP through an activated gamma-phospho-Glu-tRNA(Gln). This is Glutamyl-tRNA(Gln) amidotransferase subunit A from Geobacillus stearothermophilus (Bacillus stearothermophilus).